Reading from the N-terminus, the 407-residue chain is Phosphoglycerate kinase (407 aa).

Residues 24–26 (DFN), Arg-40, 63–66 (HLGR), Arg-121, and Arg-154 each bind substrate. ATP-binding positions include Lys-205, Glu-337, and 363–366 (GGDS).

This sequence belongs to the phosphoglycerate kinase family. In terms of assembly, monomer.

The protein localises to the cytoplasm. The enzyme catalyses (2R)-3-phosphoglycerate + ATP = (2R)-3-phospho-glyceroyl phosphate + ADP. The protein operates within carbohydrate degradation; glycolysis; pyruvate from D-glyceraldehyde 3-phosphate: step 2/5. This chain is Phosphoglycerate kinase, found in Gloeobacter violaceus (strain ATCC 29082 / PCC 7421).